Here is a 396-residue protein sequence, read N- to C-terminus: Tryptophan synthase beta chain (396 aa).

Position 96 is an N6-(pyridoxal phosphate)lysine (Lys96).

Belongs to the TrpB family. In terms of assembly, tetramer of two alpha and two beta chains. It depends on pyridoxal 5'-phosphate as a cofactor.

It carries out the reaction (1S,2R)-1-C-(indol-3-yl)glycerol 3-phosphate + L-serine = D-glyceraldehyde 3-phosphate + L-tryptophan + H2O. The protein operates within amino-acid biosynthesis; L-tryptophan biosynthesis; L-tryptophan from chorismate: step 5/5. Its function is as follows. The beta subunit is responsible for the synthesis of L-tryptophan from indole and L-serine. The chain is Tryptophan synthase beta chain from Azobacteroides pseudotrichonymphae genomovar. CFP2.